The primary structure comprises 225 residues: Protein-L-isoaspartate O-methyltransferase 2 (225 aa).

Serine 73 is a catalytic residue.

The protein belongs to the methyltransferase superfamily. L-isoaspartyl/D-aspartyl protein methyltransferase family.

The protein resides in the cytoplasm. The catalysed reaction is [protein]-L-isoaspartate + S-adenosyl-L-methionine = [protein]-L-isoaspartate alpha-methyl ester + S-adenosyl-L-homocysteine. Functionally, catalyzes the methyl esterification of L-isoaspartyl residues in peptides and proteins that result from spontaneous decomposition of normal L-aspartyl and L-asparaginyl residues. It plays a role in the repair and/or degradation of damaged proteins. The chain is Protein-L-isoaspartate O-methyltransferase 2 from Pelobacter propionicus (strain DSM 2379 / NBRC 103807 / OttBd1).